Consider the following 419-residue polypeptide: MFSFGRARSQGRQNRSMSLGGLDYADPKKKNNYLGKILLTASLTALCIFMLKQSPTFNTPSVFSRHEPGVTHVLVTGGAGYIGSHAALRLLKESYRVTIVDNLSRGNLAAVRILQELFPEPGRLQFIYADLGDAKAVNKIFTENAFDAVMHFAAVAYVGESTQFPLKYYHNITSNTLVVLETMAAHGVKTLIYSSTCATYGEPDIMPITEETPQVPINPYGKAKKMAEDIILDFSKNSDMAVMILRYFNVIGSDPEGRLGEAPRPELREHGRISGACFDAARGIMPGLQIKGTDYKTADGTCVRDYIDVTDLVDAHVKALQKAKPRKVGIYNVGTGKGSSVKEFVEACKKATGVEIKIDYLPRRAGDYAEVYSDPSKIRKELNWTAKHTNLKESLETAWRWQKLHRNGYGLTTSSVSVY.

The interval 1–21 (MFSFGRARSQGRQNRSMSLGG) is disordered. Over 1–32 (MFSFGRARSQGRQNRSMSLGGLDYADPKKKNN) the chain is Cytoplasmic. Residues 33-51 (YLGKILLTASLTALCIFML) traverse the membrane as a helical; Signal-anchor for type II membrane protein segment. The Lumenal portion of the chain corresponds to 52 to 419 (KQSPTFNTPS…GLTTSSVSVY (368 aa)). NAD(+) is bound at residue 72-103 (HVLVTGGAGYIGSHAALRLLKESYRVTIVDNL). The active-site Proton acceptor is Tyr220.

It belongs to the NAD(P)-dependent epimerase/dehydratase family. The cofactor is NAD(+). In terms of tissue distribution, high expression in roots. Also found in leaves, stems, flowers, and siliques.

The protein resides in the golgi apparatus. It is found in the golgi stack membrane. It carries out the reaction UDP-beta-L-arabinopyranose = UDP-alpha-D-xylose. Its pathway is nucleotide-sugar biosynthesis; UDP-L-arabinose biosynthesis; UDP-L-arabinose from UDP-alpha-D-xylose: step 1/1. It participates in cell wall biogenesis; cell wall polysaccharide biosynthesis. Functionally, acts as a UDP-D-xylose 4-epimerase but lacks both UDP-D-glucose and UDP-D-glucuronic acid 4-epimerase activities in vitro. The protein is UDP-arabinose 4-epimerase 1 of Arabidopsis thaliana (Mouse-ear cress).